Reading from the N-terminus, the 102-residue chain is MAEQKMRIKLKGYDHAIIDQSILKIIEAAEGTGAKVRGPIPLPTDKQVITILRAVHKYKDSREQFEMRTHKRLLEILNPTPTTMDVLKRVQLPSGVDIEIKL.

This sequence belongs to the universal ribosomal protein uS10 family. Part of the 30S ribosomal subunit.

Its function is as follows. Involved in the binding of tRNA to the ribosomes. In Mesoplasma florum (strain ATCC 33453 / NBRC 100688 / NCTC 11704 / L1) (Acholeplasma florum), this protein is Small ribosomal subunit protein uS10.